A 445-amino-acid polypeptide reads, in one-letter code: Phosphoglucosamine mutase 1 (445 aa).

Serine 102 functions as the Phosphoserine intermediate in the catalytic mechanism. Residues serine 102, aspartate 241, aspartate 243, and aspartate 245 each coordinate Mg(2+). Residue serine 102 is modified to Phosphoserine.

This sequence belongs to the phosphohexose mutase family. Mg(2+) is required as a cofactor. Activated by phosphorylation.

It catalyses the reaction alpha-D-glucosamine 1-phosphate = D-glucosamine 6-phosphate. Functionally, catalyzes the conversion of glucosamine-6-phosphate to glucosamine-1-phosphate. This is Phosphoglucosamine mutase 1 from Shewanella sp. (strain MR-7).